Here is a 354-residue protein sequence, read N- to C-terminus: Ferrochelatase (354 aa).

Fe cation-binding residues include H214 and E295.

Belongs to the ferrochelatase family.

Its subcellular location is the cytoplasm. It carries out the reaction heme b + 2 H(+) = protoporphyrin IX + Fe(2+). It participates in porphyrin-containing compound metabolism; protoheme biosynthesis; protoheme from protoporphyrin-IX: step 1/1. In terms of biological role, catalyzes the ferrous insertion into protoporphyrin IX. The sequence is that of Ferrochelatase from Burkholderia orbicola (strain MC0-3).